Reading from the N-terminus, the 154-residue chain is D-aminoacyl-tRNA deacylase (154 aa).

The short motif at 142–143 (GP) is the Gly-cisPro motif, important for rejection of L-amino acids element.

The protein belongs to the DTD family. As to quaternary structure, homodimer.

It is found in the cytoplasm. The enzyme catalyses glycyl-tRNA(Ala) + H2O = tRNA(Ala) + glycine + H(+). It catalyses the reaction a D-aminoacyl-tRNA + H2O = a tRNA + a D-alpha-amino acid + H(+). In terms of biological role, an aminoacyl-tRNA editing enzyme that deacylates mischarged D-aminoacyl-tRNAs. Also deacylates mischarged glycyl-tRNA(Ala), protecting cells against glycine mischarging by AlaRS. Acts via tRNA-based rather than protein-based catalysis; rejects L-amino acids rather than detecting D-amino acids in the active site. By recycling D-aminoacyl-tRNA to D-amino acids and free tRNA molecules, this enzyme counteracts the toxicity associated with the formation of D-aminoacyl-tRNA entities in vivo and helps enforce protein L-homochirality. The protein is D-aminoacyl-tRNA deacylase of Polaromonas sp. (strain JS666 / ATCC BAA-500).